Consider the following 217-residue polypeptide: Uridylate kinase (217 aa).

ATP is bound at residue 6–10 (KLSGR). Position 38 (glycine 38) interacts with UMP. ATP-binding residues include glycine 39 and arginine 43. Residues aspartate 60 and 107 to 113 (FQPGQST) each bind UMP. The ATP site is built by asparagine 134, tyrosine 139, and aspartate 142.

It belongs to the UMP kinase family. Homohexamer.

It is found in the cytoplasm. The enzyme catalyses UMP + ATP = UDP + ADP. It participates in pyrimidine metabolism; CTP biosynthesis via de novo pathway; UDP from UMP (UMPK route): step 1/1. Inhibited by UTP. Functionally, catalyzes the reversible phosphorylation of UMP to UDP. This is Uridylate kinase from Pyrobaculum aerophilum (strain ATCC 51768 / DSM 7523 / JCM 9630 / CIP 104966 / NBRC 100827 / IM2).